A 322-amino-acid polypeptide reads, in one-letter code: TATA box-binding protein-like 2 (322 aa).

A disordered region spans residues 31–54 (PALSSTQDSTYLSGRAGPSRESGA). The span at 32–42 (ALSSTQDSTYL) shows a compositional bias: polar residues.

The protein belongs to the TBP family.

Its subcellular location is the nucleus. TATA box-binding transcription factor. Members of the TBP family are differentially required to regulate transcription and development during early embryogenesis. This Takifugu rubripes (Japanese pufferfish) protein is TATA box-binding protein-like 2.